Reading from the N-terminus, the 306-residue chain is Glutamyl-Q tRNA(Asp) synthetase (306 aa).

L-glutamate contacts are provided by residues 29-33 (RFAPS) and Asp65. The 'HIGH' region signature appears at 32–42 (PSPTGPLHLGN). Zn(2+) is bound by residues Cys121, Cys123, Tyr141, and Cys145. Residues Tyr188 and Arg206 each contribute to the L-glutamate site. Residues 244-248 (KLAKR) carry the 'KMSKS' region motif. Lys247 serves as a coordination point for ATP.

The protein belongs to the class-I aminoacyl-tRNA synthetase family. GluQ subfamily. Zn(2+) is required as a cofactor.

Catalyzes the tRNA-independent activation of glutamate in presence of ATP and the subsequent transfer of glutamate onto a tRNA(Asp). Glutamate is transferred on the 2-amino-5-(4,5-dihydroxy-2-cyclopenten-1-yl) moiety of the queuosine in the wobble position of the QUC anticodon. The protein is Glutamyl-Q tRNA(Asp) synthetase of Prochlorococcus marinus (strain MIT 9303).